A 67-amino-acid polypeptide reads, in one-letter code: Light-harvesting protein B-870 alpha chain (67 aa).

The Cytoplasmic segment spans residues 1–12 (MWRIWRLFDPMR). Residues 13 to 33 (AMVAQAVFLLGLAVLIHLMLL) form a helical membrane-spanning segment. Histidine 29 contacts a bacteriochlorophyll. The Periplasmic portion of the chain corresponds to 34–67 (GTNKYNWLDGAKKAPVATAVAPVPAEVTSLAQAK).

This sequence belongs to the antenna complex alpha subunit family. In terms of assembly, an alpha/beta heterodimer. The core complex is formed by different alpha and beta chains, binding bacteriochlorophyll molecules, and arranged most probably in tetrameric structures disposed around the reaction center. The non-pigmented gamma chains may constitute additional components.

Its subcellular location is the cell inner membrane. In terms of biological role, antenna complexes are light-harvesting systems, which transfer the excitation energy to the reaction centers. The polypeptide is Light-harvesting protein B-870 alpha chain (pufA) (Rubrivivax gelatinosus (strain NBRC 100245 / IL144)).